Consider the following 485-residue polypeptide: Cytosol non-specific dipeptidase (485 aa).

His76 is a binding site for Zn(2+). Asp78 is a catalytic residue. Asp115 is a binding site for Zn(2+). The active-site Proton acceptor is the Glu145. Residues Glu146 and Asp169 each coordinate Zn(2+). Lys296 is subject to N6-acetyllysine. His457 contributes to the Zn(2+) binding site.

This sequence belongs to the peptidase M20C family. Zn(2+) serves as cofactor. Requires Co(2+) as cofactor.

The catalysed reaction is Hydrolysis of dipeptides, preferentially hydrophobic dipeptides including prolyl amino acids.. Its activity is regulated as follows. Inhibited by metal chelators. In terms of biological role, dipeptidase with broad substrate specificity. Requires dipeptide substrates with an unblocked N-terminus and the amino group in the alpha or beta position. Non-protein amino acids and proline are not accepted in the C-terminal position, whereas some dipeptide amides and formyl amino acids are hydrolyzed. Also shows cysteinylglycinase activity, which is sufficient for E.coli to utilize cysteinylglycine as a cysteine source. This chain is Cytosol non-specific dipeptidase (pepD), found in Escherichia coli (strain K12).